Here is a 431-residue protein sequence, read N- to C-terminus: Glutamate--tRNA ligase 2 (431 aa).

Positions P6–N16 match the 'HIGH' region motif. Residues K235–R239 carry the 'KMSKS' region motif. K238 is a binding site for ATP.

The protein belongs to the class-I aminoacyl-tRNA synthetase family. Glutamate--tRNA ligase type 1 subfamily. Monomer.

The protein localises to the cytoplasm. The enzyme catalyses tRNA(Glu) + L-glutamate + ATP = L-glutamyl-tRNA(Glu) + AMP + diphosphate. Functionally, catalyzes the attachment of glutamate to tRNA(Glu) in a two-step reaction: glutamate is first activated by ATP to form Glu-AMP and then transferred to the acceptor end of tRNA(Glu). This Campylobacter jejuni subsp. doylei (strain ATCC BAA-1458 / RM4099 / 269.97) protein is Glutamate--tRNA ligase 2.